The chain runs to 317 residues: Transmembrane and death domain protein 1 (317 aa).

A signal peptide spans 1 to 27 (MAARTLASALVLTLWVWALAPAGAVDA). The Extracellular portion of the chain corresponds to 28–218 (MGPHAAVRLA…ERSPMGWAGP (191 aa)). Over residues 62 to 73 (ELSRLSEDRLAR) the composition is skewed to basic and acidic residues. Residues 62–106 (ELSRLSEDRLARPEPLNTTSGSPSRRRRREAAEDPAGRVAGPGEV) are disordered. Residues 66-150 (LSEDRLARPE…DVARELGKNL (85 aa)) enclose the Death domain. An N-linked (GlcNAc...) asparagine glycan is attached at Asn78. Residues 219–239 (LALGLLTGFVGALGTGALVVL) traverse the membrane as a helical segment. Residues 240–317 (LTLWITGGDG…SWGSGALDGL (78 aa)) are Cytoplasmic-facing.

The protein resides in the membrane. The protein is Transmembrane and death domain protein 1 of Homo sapiens (Human).